The following is a 37-amino-acid chain: Large ribosomal subunit protein bL36 (37 aa).

It belongs to the bacterial ribosomal protein bL36 family.

In Synechococcus sp. (strain CC9311), this protein is Large ribosomal subunit protein bL36.